Here is a 302-residue protein sequence, read N- to C-terminus: Lysosomal thioesterase PPT2 (302 aa).

Positions 1 to 27 (MLGLCGQRLPAAWVLLLLPFLPLLLLA) are cleaved as a signal peptide. An N-linked (GlcNAc...) asparagine glycan is attached at N60. 2 disulfide bridges follow: C109/C117 and C165/C176. The Nucleophile role is filled by S111. N-linked (GlcNAc...) asparagine glycans are attached at residues N190 and N206. D228 is an active-site residue. N245 carries an N-linked (GlcNAc...) asparagine glycan. C276 and C296 are disulfide-bonded. Residue H283 is part of the active site. N289 is a glycosylation site (N-linked (GlcNAc...) asparagine).

The protein belongs to the palmitoyl-protein thioesterase family. As to expression, broadly expressed, with highest levels in skeletal muscle.

The protein resides in the lysosome. It catalyses the reaction hexadecanoyl-CoA + H2O = hexadecanoate + CoA + H(+). The catalysed reaction is S-hexadecanoyl-N-acetylcysteamine + H2O = N-acetylcysteamine + hexadecanoate + H(+). Catalyzes the cleavage of thioester bonds from S-palmitoyl-CoA or S-palmitoyl-N-acetylcysteamine (unbranched structures) but does not have activity against palmitoylcysteine or palmitoylated proteins, branched structures or bulky head groups. Conversely, hydrolyzes both long and short chain fatty acyl-CoA substrate. Its function is as follows. Catalytically inactive due to lack of active site His-283. This is Lysosomal thioesterase PPT2 from Homo sapiens (Human).